Reading from the N-terminus, the 239-residue chain is Fatty acid metabolism regulator protein (239 aa).

Residues 6 to 74 form the HTH gntR-type domain; it reads QSPAGFAEEY…HGKPTQVNNF (69 aa). The H-T-H motif DNA-binding region spans 34-53; that stretch reads ERELSELIGVTRTTLREVLQ.

In terms of assembly, homodimer.

The protein resides in the cytoplasm. Functionally, multifunctional regulator of fatty acid metabolism. The polypeptide is Fatty acid metabolism regulator protein (Edwardsiella ictaluri (strain 93-146)).